Consider the following 2280-residue polypeptide: Protein Ycf2 (2280 aa).

Residue 1634-1641 (GSIGTGRS) participates in ATP binding.

Belongs to the Ycf2 family.

The protein localises to the plastid. It is found in the chloroplast stroma. In terms of biological role, probable ATPase of unknown function. Its presence in a non-photosynthetic plant (Epifagus virginiana) and experiments in tobacco indicate that it has an essential function which is probably not related to photosynthesis. The chain is Protein Ycf2 from Eucalyptus globulus subsp. globulus (Tasmanian blue gum).